The chain runs to 73 residues: MLQSCYNFLKEQHCQKASTQKGAEAAVKPLLVPHHVVATVQEIQLQAAVGELLLLEWLAMAVMLLLLCCCLTD.

A helical transmembrane segment spans residues 47–67 (AAVGELLLLEWLAMAVMLLLL).

It localises to the membrane. In terms of biological role, may induce apoptosis in cardiomyocytes when overexpressed ex-vivo. The chain is Putative ORF9c protein from Homo sapiens (Human).